The primary structure comprises 120 residues: uncharacterized protein (120 aa).

This is an uncharacterized protein from Aquifex aeolicus (strain VF5).